We begin with the raw amino-acid sequence, 66 residues long: Phylloseptin-H9 (66 aa).

The first 22 residues, 1 to 22 (MAFLKKSLFLVLFLGLVSLSIC), serve as a signal peptide directing secretion. The propeptide occupies 23-44 (EEEKRETEEEENDQEEDDKSEE). Residues 24-44 (EEKRETEEEENDQEEDDKSEE) form a disordered region. Positions 30-41 (EEEENDQEEDDK) are enriched in acidic residues. L65 is subject to Leucine amide.

Expressed by the skin glands.

It is found in the secreted. Its function is as follows. Has antimicrobial activity. The polypeptide is Phylloseptin-H9 (Pithecopus hypochondrialis (Orange-legged leaf frog)).